Reading from the N-terminus, the 544-residue chain is Chaperonin GroEL 1 (544 aa).

ATP-binding positions include 29–32, 86–90, Gly-413, 479–481, and Asp-495; these read TLGP, DGTTT, and NAA.

The protein belongs to the chaperonin (HSP60) family. As to quaternary structure, forms a cylinder of 14 subunits composed of two heptameric rings stacked back-to-back. Interacts with the co-chaperonin GroES.

It localises to the cytoplasm. The catalysed reaction is ATP + H2O + a folded polypeptide = ADP + phosphate + an unfolded polypeptide.. Functionally, together with its co-chaperonin GroES, plays an essential role in assisting protein folding. The GroEL-GroES system forms a nano-cage that allows encapsulation of the non-native substrate proteins and provides a physical environment optimized to promote and accelerate protein folding. This chain is Chaperonin GroEL 1, found in Synechococcus sp. (strain CC9902).